A 379-amino-acid chain; its full sequence is tRNA-specific 2-thiouridylase MnmA (379 aa).

Residues 9–16 (AMSGGVDS) and methionine 35 contribute to the ATP site. Positions 94-96 (NPD) are interaction with target base in tRNA. The active-site Nucleophile is the cysteine 99. A disulfide bridge connects residues cysteine 99 and cysteine 195. An ATP-binding site is contributed by glycine 123. Residues 145–147 (KDQ) are interaction with tRNA. Cysteine 195 functions as the Cysteine persulfide intermediate in the catalytic mechanism. The tract at residues 307–308 (RY) is interaction with tRNA.

It belongs to the MnmA/TRMU family.

The protein resides in the cytoplasm. It catalyses the reaction S-sulfanyl-L-cysteinyl-[protein] + uridine(34) in tRNA + AH2 + ATP = 2-thiouridine(34) in tRNA + L-cysteinyl-[protein] + A + AMP + diphosphate + H(+). Its function is as follows. Catalyzes the 2-thiolation of uridine at the wobble position (U34) of tRNA, leading to the formation of s(2)U34. This Xylella fastidiosa (strain M23) protein is tRNA-specific 2-thiouridylase MnmA.